The sequence spans 274 residues: ATP synthase subunit a (274 aa).

The next 5 membrane-spanning stretches (helical) occupy residues T43 to F63, V103 to L123, D149 to I169, L223 to P243, and A245 to V265.

It belongs to the ATPase A chain family. F-type ATPases have 2 components, CF(1) - the catalytic core - and CF(0) - the membrane proton channel. CF(1) has five subunits: alpha(3), beta(3), gamma(1), delta(1), epsilon(1). CF(0) has three main subunits: a(1), b(2) and c(9-12). The alpha and beta chains form an alternating ring which encloses part of the gamma chain. CF(1) is attached to CF(0) by a central stalk formed by the gamma and epsilon chains, while a peripheral stalk is formed by the delta and b chains.

It is found in the cell inner membrane. Key component of the proton channel; it plays a direct role in the translocation of protons across the membrane. This chain is ATP synthase subunit a, found in Yersinia enterocolitica serotype O:8 / biotype 1B (strain NCTC 13174 / 8081).